The primary structure comprises 368 residues: MAQPTYHIACLPGDGIGPEVTRGAVTVLQAAAAAYGFRLEFSEYLVGGAAYDAVGTPFPDETRDACDRADAILFGAVGGPRYEGLPWDLRPEAGLLAIRKRYDLYANLRPILLYPPLKDASPLKNEIIGGGVDFIIVRELVGGIYFGEPRGIETLPDGTRRGVNTEVYTDAEIARIARMGFEIARGRRRRLTSVDKGNVMEAGKLWRTVVDEVAREFPDVEVEHLLADNAAMQILRRPGDFDVMLASNLFGDFLSDEAAMLTGSIGLLPSASLGAARNRFGLPKGFYEPIHGSAPDIAGQDRANPLAAILCGAMLLRHSLGREDAARAVEQAVAAVLEEGLRTADITVPGTAVLGTAAMARAVADRVH.

79–92 contributes to the NAD(+) binding site; sequence GPRYEGLPWDLRPE. Substrate is bound by residues arginine 99, arginine 109, arginine 138, and aspartate 228. Mg(2+) is bound by residues aspartate 228, aspartate 252, and aspartate 256. Residue 292 to 304 coordinates NAD(+); that stretch reads GSAPDIAGQDRAN.

The protein belongs to the isocitrate and isopropylmalate dehydrogenases family. LeuB type 1 subfamily. As to quaternary structure, homodimer. Mg(2+) serves as cofactor. It depends on Mn(2+) as a cofactor.

It is found in the cytoplasm. The catalysed reaction is (2R,3S)-3-isopropylmalate + NAD(+) = 4-methyl-2-oxopentanoate + CO2 + NADH. It participates in amino-acid biosynthesis; L-leucine biosynthesis; L-leucine from 3-methyl-2-oxobutanoate: step 3/4. Its function is as follows. Catalyzes the oxidation of 3-carboxy-2-hydroxy-4-methylpentanoate (3-isopropylmalate) to 3-carboxy-4-methyl-2-oxopentanoate. The product decarboxylates to 4-methyl-2 oxopentanoate. The sequence is that of 3-isopropylmalate dehydrogenase from Symbiobacterium thermophilum (strain DSM 24528 / JCM 14929 / IAM 14863 / T).